The primary structure comprises 435 residues: Glutamyl-tRNA reductase (435 aa).

Residues 50-53, Ser110, 115-117, and Gln121 contribute to the substrate site; these read TCNR and ETQ. Cys51 (nucleophile) is an active-site residue. Position 189 to 194 (189 to 194) interacts with NADP(+); it reads GAGEMS.

The protein belongs to the glutamyl-tRNA reductase family. In terms of assembly, homodimer.

The enzyme catalyses (S)-4-amino-5-oxopentanoate + tRNA(Glu) + NADP(+) = L-glutamyl-tRNA(Glu) + NADPH + H(+). The protein operates within porphyrin-containing compound metabolism; protoporphyrin-IX biosynthesis; 5-aminolevulinate from L-glutamyl-tRNA(Glu): step 1/2. Its function is as follows. Catalyzes the NADPH-dependent reduction of glutamyl-tRNA(Glu) to glutamate 1-semialdehyde (GSA). The polypeptide is Glutamyl-tRNA reductase (Campylobacter lari (strain RM2100 / D67 / ATCC BAA-1060)).